The following is a 690-amino-acid chain: Elongation factor G (690 aa).

Positions 8 to 283 constitute a tr-type G domain; it reads DKYRNIGIMA…AVVDFLPSPL (276 aa). GTP is bound by residues 17 to 24, 81 to 85, and 135 to 138; these read AHIDAGKT, DTPGH, and NKLD.

It belongs to the TRAFAC class translation factor GTPase superfamily. Classic translation factor GTPase family. EF-G/EF-2 subfamily.

Its subcellular location is the cytoplasm. In terms of biological role, catalyzes the GTP-dependent ribosomal translocation step during translation elongation. During this step, the ribosome changes from the pre-translocational (PRE) to the post-translocational (POST) state as the newly formed A-site-bound peptidyl-tRNA and P-site-bound deacylated tRNA move to the P and E sites, respectively. Catalyzes the coordinated movement of the two tRNA molecules, the mRNA and conformational changes in the ribosome. This chain is Elongation factor G, found in Zymomonas mobilis subsp. mobilis (strain ATCC 31821 / ZM4 / CP4).